The primary structure comprises 184 residues: RNA polymerase sigma factor HrpL (184 aa).

Residues 49-62 carry the Polymerase core binding motif; sequence DILQCVFLEALRNE. A DNA-binding region (H-T-H motif) is located at residues 151–170; that stretch reads YQETANTLGVPIGTVRSRLS.

It belongs to the sigma-70 factor family. ECF subfamily.

Its function is as follows. Sigma factors are initiation factors that promote the attachment of RNA polymerase to specific initiation sites and are then released. This sigma factor is involved in the activation of hprD as well as other hrp loci which are involved in plant pathogenicity, hrmA and avr genes. The sequence is that of RNA polymerase sigma factor HrpL (hrpL) from Pseudomonas syringae pv. syringae.